We begin with the raw amino-acid sequence, 572 residues long: DNA polymerase (572 aa).

Positions 1-222 (MSRKMFSCDF…LPMDKEIRKA (222 aa)) are 3'-5' exonuclease and strand displacement activities. The tract at residues 56–66 (YFHNLKFDGAF) is interaction with the primer terminal protein. Aspartate 142 and aspartate 166 together coordinate Mg(2+). The tract at residues 223–226 (YRGG) is DNA-binding; Involved in the formation of a stable complex between TP and phi29 DNA polymerase. The interval 227-572 (FTWLNDKYKE…VLVDSVFTIK (346 aa)) is initiation, polymerization and pyrophosphorolytic activities. Positions 246 and 247 each coordinate Mg(2+). 5-methyl-UTP contacts are provided by tyrosine 251, lysine 368, and lysine 380. Mg(2+)-binding residues include aspartate 453 and aspartate 455. Aspartate 455 provides a ligand contact to 5-methyl-UTP.

This sequence belongs to the DNA polymerase type-B family. In terms of assembly, interacts with the primer terminal protein; this interaction allows the initiation of TP-primed DNA replication at both viral DNA ends. Interacts with DNA. Mg(2+) serves as cofactor.

The catalysed reaction is DNA(n) + a 2'-deoxyribonucleoside 5'-triphosphate = DNA(n+1) + diphosphate. Its function is as follows. Polymerase responsible for protein-primed viral DNA replication by strand displacement with high processivity and fidelity. To start replication, the DNA polymerase forms a heterodimer with a free primer terminal protein (TP), recognizes the replication origins at both 5' ends of the linear chromosome, and initiates replication using as primer the OH-group of Ser-232 of the TP. This polymerase possesses three enzymatic activities: DNA synthesis (polymerase), primer terminal protein (TP) deoxynucleotidylation, which is the formation of a covalent linkage (phosphoester) between the hydroxyl group of a specific serine residue in TP and 5'-dAMP, a reaction directed by the third T at the 3' end, and 3' to 5' exonuclease activity. Exonuclease activity has a proofreading purpose. Since the polymerase initiates the replication on the third thymine, the TP-dAMP initiation product translocates backwards to recover the template information of the 2 terminal nucleotide (sliding back-mechanism). The chain is DNA polymerase from Bacillus phage Nf (Bacteriophage Nf).